The following is a 336-amino-acid chain: RHOMBOID-like protein 12, mitochondrial (336 aa).

Residues 1–85 (MKAIFNRRVV…RGFFASALGN (85 aa)) constitute a mitochondrion transit peptide. 6 consecutive transmembrane segments (helical) span residues 135–155 (VVLG…VFNQ), 185–205 (IDIG…TSIA), 216–236 (LYLA…AYMA), 254–274 (PGLG…FLHP), 276–296 (ATLY…IFLI), and 307–327 (NSNI…IAWA). Ser-259 serves as the catalytic Nucleophile. His-315 acts as the Charge relay system in catalysis.

The protein belongs to the peptidase S54 family.

Its subcellular location is the mitochondrion membrane. Probable rhomboid-type serine protease that catalyzes intramembrane proteolysis. Unable to cleave either of the yeast Pcp1 substrates in yeast cells. The polypeptide is RHOMBOID-like protein 12, mitochondrial (Arabidopsis thaliana (Mouse-ear cress)).